We begin with the raw amino-acid sequence, 101 residues long: RNA-binding protein Hfq (101 aa).

In terms of domain architecture, Sm spans 9-68; that stretch reads DPFLNALRRERVPVSIYLVNGIKLQGQIESFDQFVILLKNTVSQMVYKHAISTVVPSRPV. The segment at 63-101 is disordered; that stretch reads VPSRPVSHHNNNPSGGSSNYHHGSTPASQPSQPESDDAE. The span at 70-86 shows a compositional bias: low complexity; it reads HHNNNPSGGSSNYHHGS.

The protein belongs to the Hfq family. As to quaternary structure, homohexamer.

RNA chaperone that binds small regulatory RNA (sRNAs) and mRNAs to facilitate mRNA translational regulation in response to envelope stress, environmental stress and changes in metabolite concentrations. Also binds with high specificity to tRNAs. This Sodalis glossinidius (strain morsitans) protein is RNA-binding protein Hfq.